The primary structure comprises 148 residues: Lysozyme-like protein 6 (148 aa).

The N-terminal stretch at 1–19 is a signal peptide; it reads MLKALFICVASCLLVVNDG. The 129-residue stretch at 20–148 folds into the C-type lysozyme domain; that stretch reads NIIHRCSLAK…SYWMTGCHLG (129 aa). 4 disulfide bridges follow: cysteine 25–cysteine 145, cysteine 49–cysteine 133, cysteine 83–cysteine 98, and cysteine 94–cysteine 112. The active site involves glutamate 54. Asparagine 58 is a glycosylation site (N-linked (GlcNAc...) asparagine). The active site involves aspartate 71.

This sequence belongs to the glycosyl hydrolase 22 family. As to quaternary structure, monomer. Expressed strongly in testis and epididymis and weakly in seminal vesicle, vas deferens, kidney and spleen. Highly expressed in primary spermatocytes and round spermatids (at protein level).

The protein resides in the secreted. Its subcellular location is the cell surface. The protein localises to the cell projection. It localises to the cilium. It is found in the flagellum. The enzyme catalyses Hydrolysis of (1-&gt;4)-beta-linkages between N-acetylmuramic acid and N-acetyl-D-glucosamine residues in a peptidoglycan and between N-acetyl-D-glucosamine residues in chitodextrins.. Its function is as follows. May be involved sperm-egg plasma membrane adhesion and fusion during fertilization. Exhibits bacteriolytic activity in vitro against Micrococcus luteus and Staphylococcus aureus. Shows weak bacteriolytic activity against Gram-positive bacteria at physiological pH. Bacteriolytic activity is pH-dependent, with a maximum at around pH 5.6. The polypeptide is Lysozyme-like protein 6 (Lyzl6) (Mus musculus (Mouse)).